We begin with the raw amino-acid sequence, 153 residues long: NADPH-dependent 7-cyano-7-deazaguanine reductase (153 aa).

A compositionally biased stretch (polar residues) spans 1–17 (MTDTRNLTQLGSKTQAP). The disordered stretch occupies residues 1 to 23 (MTDTRNLTQLGSKTQAPASPEAA). Cys-51 acts as the Thioimide intermediate in catalysis. Asp-58 (proton donor) is an active-site residue. Substrate is bound by residues 73–75 (VES) and 92–93 (HE).

The protein belongs to the GTP cyclohydrolase I family. QueF type 1 subfamily.

The protein resides in the cytoplasm. It carries out the reaction 7-aminomethyl-7-carbaguanine + 2 NADP(+) = 7-cyano-7-deazaguanine + 2 NADPH + 3 H(+). The protein operates within tRNA modification; tRNA-queuosine biosynthesis. Functionally, catalyzes the NADPH-dependent reduction of 7-cyano-7-deazaguanine (preQ0) to 7-aminomethyl-7-deazaguanine (preQ1). This chain is NADPH-dependent 7-cyano-7-deazaguanine reductase, found in Chelativorans sp. (strain BNC1).